The sequence spans 339 residues: Ectoine/5-hydroxyectoine-binding periplasmic protein UehA (339 aa).

Positions 1-20 (MAQSITFTFGAVAAAGIALA) are cleaved as a signal peptide. Residues Glu36, Arg171, Asn211, Phe215, and Phe236 each contribute to the L-ectoine site. Cys162 and Cys303 form a disulfide bridge.

Belongs to the bacterial solute-binding protein 7 family. As to quaternary structure, monomer. The complex comprises the extracytoplasmic solute receptor protein UehA, and the two transmembrane proteins UehB and UehC.

It is found in the periplasm. Functionally, part of the tripartite ATP-independent periplasmic (TRAP) transport system UehABC, which imports both ectoine and 5-hydroxyectoine as nutrients, and not as osmoprotectants. UehA binds both ectoine and 5-hydroxyectoine with high specificity and affinity. In Ruegeria pomeroyi (strain ATCC 700808 / DSM 15171 / DSS-3) (Silicibacter pomeroyi), this protein is Ectoine/5-hydroxyectoine-binding periplasmic protein UehA.